The sequence spans 127 residues: Holo-[acyl-carrier-protein] synthase (127 aa).

Mg(2+) is bound by residues aspartate 7 and glutamate 53.

This sequence belongs to the P-Pant transferase superfamily. AcpS family. The cofactor is Mg(2+).

Its subcellular location is the cytoplasm. The catalysed reaction is apo-[ACP] + CoA = holo-[ACP] + adenosine 3',5'-bisphosphate + H(+). In terms of biological role, transfers the 4'-phosphopantetheine moiety from coenzyme A to a Ser of acyl-carrier-protein. The sequence is that of Holo-[acyl-carrier-protein] synthase from Herpetosiphon aurantiacus (strain ATCC 23779 / DSM 785 / 114-95).